A 280-amino-acid chain; its full sequence is Uroporphyrinogen-III C-methyltransferase (280 aa).

S-adenosyl-L-homocysteine is bound by residues proline 24, 100-102, 130-131, methionine 184, alanine 213, and alanine 241; these read GGD and TA.

Belongs to the precorrin methyltransferase family. As to quaternary structure, homodimer.

It catalyses the reaction uroporphyrinogen III + 2 S-adenosyl-L-methionine = precorrin-2 + 2 S-adenosyl-L-homocysteine + H(+). The catalysed reaction is uroporphyrinogen III + S-adenosyl-L-methionine = precorrin-1 + S-adenosyl-L-homocysteine + H(+). The enzyme catalyses precorrin-1 + S-adenosyl-L-methionine = precorrin-2 + S-adenosyl-L-homocysteine. It participates in cofactor biosynthesis; adenosylcobalamin biosynthesis; precorrin-2 from uroporphyrinogen III: step 1/1. It functions in the pathway porphyrin-containing compound metabolism; siroheme biosynthesis; precorrin-2 from uroporphyrinogen III: step 1/1. S-adenosylhomocysteine is an extremely powerful competitive inhibitor of the uroporphyrinogen III methylation. SUMT exhibits a substrate inhibition phenomenon at uroporphyrinogen III concentrations above 2 uM; this property might play a regulatory role in cobalamin biosynthesis. The enzyme activity is completely insensitive to feedback inhibition by cobalamin and corrinoid intermediates. In terms of biological role, catalyzes the two successive C-2 and C-7 methylation reactions involved in the conversion of uroporphyrinogen III to precorrin-2 via the intermediate formation of precorrin-1. It is a step in the biosynthesis of both cobalamin (vitamin B12) and siroheme. Neither uroporphyrin III nor the chlorin (factor I) is a substrate of SUMT. This chain is Uroporphyrinogen-III C-methyltransferase, found in Sinorhizobium sp.